Here is a 335-residue protein sequence, read N- to C-terminus: Transaldolase (335 aa).

Lys-135 (schiff-base intermediate with substrate) is an active-site residue.

Belongs to the transaldolase family. Type 1 subfamily. In terms of assembly, homodimer.

It is found in the cytoplasm. It carries out the reaction D-sedoheptulose 7-phosphate + D-glyceraldehyde 3-phosphate = D-erythrose 4-phosphate + beta-D-fructose 6-phosphate. It functions in the pathway carbohydrate degradation; pentose phosphate pathway; D-glyceraldehyde 3-phosphate and beta-D-fructose 6-phosphate from D-ribose 5-phosphate and D-xylulose 5-phosphate (non-oxidative stage): step 2/3. Its function is as follows. Transaldolase is important for the balance of metabolites in the pentose-phosphate pathway. This chain is Transaldolase, found in Prochlorococcus marinus (strain SARG / CCMP1375 / SS120).